We begin with the raw amino-acid sequence, 570 residues long: Glutamate--tRNA ligase (570 aa).

Positions 107–117 (PNPDFVLHLGS) match the 'HIGH' region motif.

Belongs to the class-I aminoacyl-tRNA synthetase family. Glutamate--tRNA ligase type 2 subfamily.

Its subcellular location is the cytoplasm. It carries out the reaction tRNA(Glu) + L-glutamate + ATP = L-glutamyl-tRNA(Glu) + AMP + diphosphate. Catalyzes the attachment of glutamate to tRNA(Glu) in a two-step reaction: glutamate is first activated by ATP to form Glu-AMP and then transferred to the acceptor end of tRNA(Glu). This Pyrobaculum calidifontis (strain DSM 21063 / JCM 11548 / VA1) protein is Glutamate--tRNA ligase.